A 1843-amino-acid polypeptide reads, in one-letter code: Proteasome activator complex subunit 4 (1843 aa).

The segment covering 1–11 has biased composition (low complexity); that stretch reads MEPAERAGVGE. The segment at 1-25 is disordered; sequence MEPAERAGVGEPPEPGGRPEPGPRG. Positions 12 to 22 are enriched in pro residues; the sequence is PPEPGGRPEPG. HEAT repeat units lie at residues 475–519 and 998–1037; these read PEGP…LVDC and NFCCRDIIPLVLEFLRPDRQGVTQQQFKGALYCLLGNHSG. S1121 carries the phosphoserine modification. 2 HEAT repeats span residues 1179–1217 and 1354–1392; these read RVLPLRAIRFFVENLNHDAIVVRKMAISAVAGILKQLKR and DAFLPVLKPHLEHLVADSHESTQRCVAEIIAGLIRGSKH. At S1614 the chain carries Phosphoserine. 2 HEAT repeats span residues 1636-1674 and 1680-1718; these read PHQVPLVLQVLKQTARSSSWHARYTVLTYLQTMVFYNLF and EDAVKDIRWLVISLLEDEQLEVREMAATTLSGLLQCNFL. Positions 1650 to 1738 are bromodomain-like (BRDL); the sequence is ARSSSWHARY…EQLCKTKLPK (89 aa). Residue S1746 is modified to Phosphoserine.

Belongs to the BLM10 family. Homodimer. Interacts with the 20S and 26S proteasomes. Component of the spermatoproteasome, a form of the proteasome specifically found in testis.

It localises to the cytoplasm. The protein resides in the cytosol. It is found in the nucleus. The protein localises to the nucleus speckle. Functionally, associated component of the proteasome that specifically recognizes acetylated histones and promotes ATP- and ubiquitin-independent degradation of core histones during spermatogenesis and DNA damage response. Recognizes and binds acetylated histones via its bromodomain-like (BRDL) region and activates the proteasome by opening the gated channel for substrate entry. Binds to the core proteasome via its C-terminus, which occupies the same binding sites as the proteasomal ATPases, opening the closed structure of the proteasome via an active gating mechanism. Component of the spermatoproteasome, a form of the proteasome specifically found in testis: binds to acetylated histones and promotes degradation of histones, thereby participating actively to the exchange of histones during spermatogenesis. Also involved in DNA damage response in somatic cells, by promoting degradation of histones following DNA double-strand breaks. This chain is Proteasome activator complex subunit 4, found in Homo sapiens (Human).